Consider the following 158-residue polypeptide: Cyclic pyranopterin monophosphate synthase (158 aa).

Substrate-binding positions include 76–78 and 114–115; these read MCH and ME. The active site involves Asp129.

It belongs to the MoaC family. As to quaternary structure, homohexamer; trimer of dimers.

The enzyme catalyses (8S)-3',8-cyclo-7,8-dihydroguanosine 5'-triphosphate = cyclic pyranopterin phosphate + diphosphate. It participates in cofactor biosynthesis; molybdopterin biosynthesis. In terms of biological role, catalyzes the conversion of (8S)-3',8-cyclo-7,8-dihydroguanosine 5'-triphosphate to cyclic pyranopterin monophosphate (cPMP). The chain is Cyclic pyranopterin monophosphate synthase from Clostridium perfringens (strain SM101 / Type A).